The sequence spans 778 residues: Arf-GAP with coiled-coil, ANK repeat and PH domain-containing protein 2 (778 aa).

The BAR domain maps to 1 to 226 (MKMTVDFEEC…MKDLGAQLDR (226 aa)). Positions 266–361 (GIVMEGYLFK…WIKAVQTSIA (96 aa)) constitute a PH domain. Positions 371-391 (SEKLDKKSSPSTGSLDSGNES) are disordered. Residues 379 to 388 (SPSTGSLDSG) show a composition bias toward polar residues. 2 positions are modified to phosphoserine: Ser-384 and Ser-387. The Arf-GAP domain maps to 399 to 520 (ESALQRVQCV…KFVDKYSVSS (122 aa)). The C4-type zinc finger occupies 414-437 (CCDCGLADPRWASINLGITLCIEC). The segment at 518 to 596 (VSSSPPEQEK…EPEGERQDSS (79 aa)) is disordered. Ser-521 carries the phosphoserine modification. Basic and acidic residues predominate over residues 524–539 (EQEKKVVSKDSEEKRL). Positions 550–569 (VRTSIQSSVKSNDSGIQQSS) are enriched in polar residues. 2 positions are modified to phosphoserine: Ser-581 and Ser-584. 3 ANK repeats span residues 640 to 669 (NKATPLIQAVLGGSLVTCEFLLQNGANVNQ), 673 to 702 (QGRGPLHHATVLGHTGQVCLFLKRGANQHA), and 706 to 735 (EGKDPLSIAVEAANADIVTLLRLARMNEEM). Phosphotyrosine is present on Tyr-742. At Ser-775 the chain carries Phosphoserine.

As to quaternary structure, interacts with RAB35 (GTP-bound form); the interaction is direct and probably recruits ACAP2 to membranes. Interacts with MICALL1; the interaction is indirect through RAB35.

It is found in the endosome membrane. Its subcellular location is the cell membrane. With respect to regulation, GAP activity stimulated by phosphatidylinositol 4,5-bisphosphate (PIP2) and phosphatidic acid. Functionally, GTPase-activating protein (GAP) for ADP ribosylation factor 6 (ARF6). Doesn't show GAP activity for RAB35. The protein is Arf-GAP with coiled-coil, ANK repeat and PH domain-containing protein 2 (ACAP2) of Oryctolagus cuniculus (Rabbit).